A 153-amino-acid chain; its full sequence is Ribonuclease H (153 aa).

The region spanning 1–141 is the RNase H type-1 domain; that stretch reads MKHIEIYTDG…CDVLARDAAS (141 aa). Mg(2+) contacts are provided by Asp9, Glu47, Asp69, and Asp133.

Belongs to the RNase H family. Monomer. Requires Mg(2+) as cofactor.

The protein localises to the cytoplasm. The catalysed reaction is Endonucleolytic cleavage to 5'-phosphomonoester.. Endonuclease that specifically degrades the RNA of RNA-DNA hybrids. In Pseudoalteromonas atlantica (strain T6c / ATCC BAA-1087), this protein is Ribonuclease H.